The chain runs to 398 residues: Lysophosphatidylserine lipase ABHD12 (398 aa).

Topologically, residues 1–74 are cytoplasmic; the sequence is MRKRTEPVAL…RKGLWLRLRK (74 aa). The chain crosses the membrane as a helical span at residues 75–95; it reads ILFCVLGLYIAIPFLIKLCPG. Topologically, residues 96 to 398 are extracellular; sequence IQAKLIFLNF…LGKSEPEHQH (303 aa). N-linked (GlcNAc...) asparagine glycosylation is present at Asn-123. Residue Ser-246 is the Nucleophile of the active site. Active-site charge relay system residues include Asp-333 and His-372.

The protein belongs to the serine esterase family.

Its subcellular location is the endoplasmic reticulum membrane. The catalysed reaction is 1-(9Z-octadecenoyl)-sn-glycero-3-phospho-L-serine + H2O = sn-glycero-3-phospho-L-serine + (9Z)-octadecenoate + H(+). It carries out the reaction 1-(9Z-octadecenoyl)-sn-glycero-3-phospho-(1'-sn-glycerol) + H2O = sn-glycero-3-phospho-(1'-sn-glycerol) + (9Z)-octadecenoate + H(+). It catalyses the reaction 1-(9Z-octadecenoyl)-sn-glycero-3-phospho-(1D-myo-inositol) + H2O = sn-glycero-3-phospho-1D-myo-inositol + (9Z)-octadecenoate + H(+). The enzyme catalyses 1-(9Z-octadecenoyl)-sn-glycero-3-phosphoethanolamine + H2O = sn-glycero-3-phosphoethanolamine + (9Z)-octadecenoate + H(+). The catalysed reaction is 1-(9Z-octadecenoyl)-sn-glycero-3-phosphocholine + H2O = 1-(9Z-octadecenoyl)-sn-glycerol + phosphocholine + H(+). It carries out the reaction 2-(9Z-octadecenoyl)-glycerol + H2O = glycerol + (9Z)-octadecenoate + H(+). It catalyses the reaction 1-hexadecanoyl-sn-glycero-3-phospho-L-serine + H2O = sn-glycero-3-phospho-L-serine + hexadecanoate + H(+). The enzyme catalyses 2-(5Z,8Z,11Z,14Z-eicosatetraenoyl)-glycerol + H2O = glycerol + (5Z,8Z,11Z,14Z)-eicosatetraenoate + H(+). The catalysed reaction is Hydrolyzes glycerol monoesters of long-chain fatty acids.. It carries out the reaction 1-decanoylglycerol + H2O = decanoate + glycerol + H(+). It catalyses the reaction 1-dodecanoylglycerol + H2O = dodecanoate + glycerol + H(+). The enzyme catalyses 1-tetradecanoylglycerol + H2O = tetradecanoate + glycerol + H(+). The catalysed reaction is 2-hexadecanoylglycerol + H2O = glycerol + hexadecanoate + H(+). It carries out the reaction 1-(9Z-octadecenoyl)-glycerol + H2O = glycerol + (9Z)-octadecenoate + H(+). It catalyses the reaction 2-(9Z,12Z-octadecadienoyl)-glycerol + H2O = (9Z,12Z)-octadecadienoate + glycerol + H(+). The enzyme catalyses 1-(5Z,8Z,11Z,14Z-eicosatetraenoyl)-glycerol + H2O = glycerol + (5Z,8Z,11Z,14Z)-eicosatetraenoate + H(+). The catalysed reaction is 1-(9Z,12Z-octadecadienoyl)-glycerol + H2O = (9Z,12Z)-octadecadienoate + glycerol + H(+). It carries out the reaction 1-hexadecanoylglycerol + H2O = glycerol + hexadecanoate + H(+). It catalyses the reaction 1-octadecanoylglycerol + H2O = octadecanoate + glycerol + H(+). The enzyme catalyses 1-octadecanoyl-2-(9,10-epoxyoctadecanoyl)-sn-glycero-3-phospho-L-serine + H2O = 9,10-epoxyoctadecanoate + 1-octadecanoyl-sn-glycero-3-phosphoserine + H(+). The catalysed reaction is 1-octadecanoyl-2-(10-hydroxyoctadecanoyl)-sn-glycero-3-phospho-L-serine + H2O = 1-octadecanoyl-sn-glycero-3-phosphoserine + 10-hydroxyoctadecanoate + H(+). It carries out the reaction 1-hexadecanoyl-2-(10-hydroxyoctadecanoyl)-sn-glycero-3-phospho-L-serine + H2O = 10-hydroxyoctadecanoate + 1-hexadecanoyl-sn-glycero-3-phospho-L-serine + H(+). In terms of biological role, lysophosphatidylserine (LPS) lipase that mediates the hydrolysis of lysophosphatidylserine, a class of signaling lipids that regulates immunological and neurological processes. Represents a major lysophosphatidylserine lipase in the brain, thereby playing a key role in the central nervous system. Also able to hydrolyze oxidized phosphatidylserine; oxidized phosphatidylserine is produced in response to severe inflammatory stress and constitutes a proapoptotic 'eat me' signal. Also has monoacylglycerol (MAG) lipase activity: hydrolyzes 2-arachidonoylglycerol (2-AG), thereby acting as a regulator of endocannabinoid signaling pathways. Has a strong preference for very-long-chain lipid substrates; substrate specificity is likely due to improved catalysis and not improved substrate binding. This Macaca fascicularis (Crab-eating macaque) protein is Lysophosphatidylserine lipase ABHD12.